We begin with the raw amino-acid sequence, 222 residues long: Peptide methionine sulfoxide reductase MsrA 2 (222 aa).

Cysteine 56 is an active-site residue.

It belongs to the MsrA Met sulfoxide reductase family.

It carries out the reaction L-methionyl-[protein] + [thioredoxin]-disulfide + H2O = L-methionyl-(S)-S-oxide-[protein] + [thioredoxin]-dithiol. The catalysed reaction is [thioredoxin]-disulfide + L-methionine + H2O = L-methionine (S)-S-oxide + [thioredoxin]-dithiol. Its function is as follows. Has an important function as a repair enzyme for proteins that have been inactivated by oxidation. Catalyzes the reversible oxidation-reduction of methionine sulfoxide in proteins to methionine. The protein is Peptide methionine sulfoxide reductase MsrA 2 (msrA2) of Nostoc sp. (strain PCC 7120 / SAG 25.82 / UTEX 2576).